The primary structure comprises 249 residues: DNA polymerase sliding clamp 1 (249 aa).

The protein belongs to the PCNA family. As to quaternary structure, forms heterodimers with PCNA2, which then recruit PCNA3; does not form homotrimers. The heterodimers interact with RfcS homotetramers. Heterotrimer which circularizes head-to-tail (head is at N-terminus, tail is at C-terminus) to form a toroid; DNA passes through its center. Replication factor C (RFC) is required to load the toroid on the DNA. Heterotrimer interacts, probably via this subunit, with flap endonuclease 1 (fen), Hjc, Dpo4, and XPF.

Functionally, one of the sliding clamp subunits that acts as a moving platform for DNA processing. Responsible for tethering the catalytic subunit of DNA polymerase to DNA during high-speed replication. Heterotrimer stimulates the Holliday junction resolvase Hjc. DNA polymerase I, DNA ligase and the flap endonuclease may be constitutively associated with the PCNA heterotrimer forming a scanning complex able to couple DNA synthesis and Okazaki fragment maturation. This chain is DNA polymerase sliding clamp 1, found in Saccharolobus solfataricus (strain ATCC 35092 / DSM 1617 / JCM 11322 / P2) (Sulfolobus solfataricus).